The sequence spans 289 residues: MYG1 protein TC_0665 (289 aa).

This sequence belongs to the MYG1 family.

The polypeptide is MYG1 protein TC_0665 (Chlamydia muridarum (strain MoPn / Nigg)).